We begin with the raw amino-acid sequence, 149 residues long: Deoxyuridine 5'-triphosphate nucleotidohydrolase (149 aa).

Substrate-binding positions include 65 to 67, asparagine 78, 82 to 84, and lysine 92; these read RSG and TID.

It belongs to the dUTPase family. Mg(2+) serves as cofactor.

It catalyses the reaction dUTP + H2O = dUMP + diphosphate + H(+). Its pathway is pyrimidine metabolism; dUMP biosynthesis; dUMP from dCTP (dUTP route): step 2/2. This enzyme is involved in nucleotide metabolism: it produces dUMP, the immediate precursor of thymidine nucleotides and it decreases the intracellular concentration of dUTP so that uracil cannot be incorporated into DNA. The sequence is that of Deoxyuridine 5'-triphosphate nucleotidohydrolase from Chlorobium chlorochromatii (strain CaD3).